The following is a 189-amino-acid chain: Large ribosomal subunit protein eL14 (189 aa).

Belongs to the eukaryotic ribosomal protein eL14 family.

In terms of biological role, component of the large ribosomal subunit. The ribosome is a large ribonucleoprotein complex responsible for the synthesis of proteins in the cell. The sequence is that of Large ribosomal subunit protein eL14 from Trypanosoma brucei brucei.